The primary structure comprises 41 residues: Large ribosomal subunit protein bL36 (41 aa).

Belongs to the bacterial ribosomal protein bL36 family.

In Brucella abortus (strain S19), this protein is Large ribosomal subunit protein bL36.